The primary structure comprises 619 residues: Guanylate cyclase soluble subunit beta-1 (619 aa).

Position 105 (histidine 105) interacts with heme. Residues 421 to 554 enclose the Guanylate cyclase domain; the sequence is TILFSGIVGF…NTVNLTSRTE (134 aa).

Belongs to the adenylyl cyclase class-4/guanylyl cyclase family. As to quaternary structure, the active enzyme is formed by a heterodimer of an alpha and a beta subunit. Heterodimer with GUCY1A1. Can also form inactive homodimers in vitro. Heme is required as a cofactor. As to expression, lung and brain.

The protein localises to the cytoplasm. The enzyme catalyses GTP = 3',5'-cyclic GMP + diphosphate. Activated by nitric oxide in the presence of magnesium or manganese ions, binding of NO to the heme iron increases catalytic activity up to 400 folds. In terms of biological role, mediates responses to nitric oxide (NO) by catalyzing the biosynthesis of the signaling molecule cGMP. The polypeptide is Guanylate cyclase soluble subunit beta-1 (GUCY1B1) (Bos taurus (Bovine)).